The primary structure comprises 64 residues: UPF0434 protein Bcep18194_A5877 (64 aa).

It belongs to the UPF0434 family.

The sequence is that of UPF0434 protein Bcep18194_A5877 from Burkholderia lata (strain ATCC 17760 / DSM 23089 / LMG 22485 / NCIMB 9086 / R18194 / 383).